Consider the following 458-residue polypeptide: 5-hydroxytryptamine receptor 2C (458 aa).

The signal sequence occupies residues 1–32; it reads MVNLRKAVHSFLVHLIGLLVWQCDISVSPVAA. The Extracellular portion of the chain corresponds to 33-55; that stretch reads LVTDIFNTSDGGRFKFPDGVQNW. The chain crosses the membrane as a helical span at residues 56 to 80; that stretch reads PALSIVIIIILTIGGNILVIMAVSL. Over 81–86 the chain is Cytoplasmic; that stretch reads EKKLHN. Residues 87–111 form a helical membrane-spanning segment; it reads ATNYFLMSLAIADMLVGLLVMPLSL. Topologically, residues 112–128 are extracellular; that stretch reads LAILYDYVWPLPRYLCP. An intrachain disulfide couples cysteine 127 to cysteine 207. The helical transmembrane segment at 129–151 threads the bilayer; it reads VWISLDVLFSTASIMHLCAISLD. Threonine 139 is a binding site for ergotamine. The DRY motif; important for ligand-induced conformation changes motif lies at 151–153; that stretch reads DRY. The Cytoplasmic portion of the chain corresponds to 152–167; the sequence is RYVAIRNPVEHSRFNS. A helical membrane pass occupies residues 168–189; the sequence is RTKAIMKIAIVWAISIGVSVPI. Over 190 to 213 the chain is Extracellular; the sequence is PVIGLRDEEKVFVNNTTCVLNDPN. Residues asparagine 203 and asparagine 204 are each glycosylated (N-linked (GlcNAc...) asparagine). Ergotamine is bound at residue leucine 209. Residues 214–236 form a helical membrane-spanning segment; it reads FVLIGSFVAFFIPLTIMVITYCL. The Cytoplasmic portion of the chain corresponds to 237–311; the sequence is TIHVLRRQAL…AINNERKASK (75 aa). A disordered region spans residues 272–301; the sequence is TEEENSANPNQDSNPRRRKKKERRPRGTMQ. The span at 287–297 shows a compositional bias: basic residues; that stretch reads RRRKKKERRPR. Residues 312–336 form a helical membrane-spanning segment; it reads VLGIVFFVFLVMWCPFFITNILSVL. Cysteine 337 and cysteine 341 form a disulfide bridge. Residues 337-347 lie on the Extracellular side of the membrane; sequence CGKACNQKLME. A helical transmembrane segment spans residues 348 to 370; sequence KLLNVFVWIGYVCSGINPLVYTL. Residues 364 to 368 carry the NPxxY motif; important for ligand-induced conformation changes and signaling motif; it reads NPLVY. The Cytoplasmic segment spans residues 371–458; sequence FNKIYRRAFS…SVVSERISSV (88 aa). The PDZ-binding signature appears at 456 to 458; the sequence is SSV.

Belongs to the G-protein coupled receptor 1 family. Interacts with MPDZ. Interacts with ARRB2. Interacts with MPP3; this interaction stabilizes the receptor at the plasma membrane and prevents the desensitization of the HTR2C receptor-mediated calcium response.

The protein localises to the cell membrane. Functionally, G-protein coupled receptor for 5-hydroxytryptamine (serotonin). Also functions as a receptor for various drugs and psychoactive substances, including ergot alkaloid derivatives, 1-2,5,-dimethoxy-4-iodophenyl-2-aminopropane (DOI) and lysergic acid diethylamide (LSD). Ligand binding causes a conformation change that triggers signaling via guanine nucleotide-binding proteins (G proteins) and modulates the activity of downstream effectors. HTR2C is coupled to G(q)/G(11) G alpha proteins and activates phospholipase C-beta, releasing diacylglycerol (DAG) and inositol 1,4,5-trisphosphate (IP3) second messengers that modulate the activity of phosphatidylinositol 3-kinase and promote the release of Ca(2+) ions from intracellular stores, respectively. Beta-arrestin family members inhibit signaling via G proteins and mediate activation of alternative signaling pathways. Regulates neuronal activity via the activation of short transient receptor potential calcium channels in the brain, and thereby modulates the activation of pro-opiomelanocortin neurons and the release of CRH that then regulates the release of corticosterone. Plays a role in the regulation of appetite and eating behavior, responses to anxiogenic stimuli and stress. Plays a role in insulin sensitivity and glucose homeostasis. This Canis lupus familiaris (Dog) protein is 5-hydroxytryptamine receptor 2C.